Consider the following 505-residue polypeptide: ATP synthase subunit alpha (505 aa).

170 to 177 lines the ATP pocket; sequence GDRQTGKS.

This sequence belongs to the ATPase alpha/beta chains family. F-type ATPases have 2 components, CF(1) - the catalytic core - and CF(0) - the membrane proton channel. CF(1) has five subunits: alpha(3), beta(3), gamma(1), delta(1), epsilon(1). CF(0) has four main subunits: a(1), b(1), b'(1) and c(9-12).

Its subcellular location is the cellular thylakoid membrane. The catalysed reaction is ATP + H2O + 4 H(+)(in) = ADP + phosphate + 5 H(+)(out). Its function is as follows. Produces ATP from ADP in the presence of a proton gradient across the membrane. The alpha chain is a regulatory subunit. This Prochlorococcus marinus (strain MIT 9215) protein is ATP synthase subunit alpha.